A 213-amino-acid polypeptide reads, in one-letter code: Probable GTP-binding protein EngB (213 aa).

In terms of domain architecture, EngB-type G spans 25–203 (EGTEVAFAGR…EDVLNGWLLP (179 aa)). GTP-binding positions include 33 to 40 (GRSNAGKS), 60 to 64 (GRTQL), 80 to 83 (DLPG), 147 to 150 (TKAD), and 179 to 184 (AQMFSA). Mg(2+) is bound by residues Ser40 and Thr62.

This sequence belongs to the TRAFAC class TrmE-Era-EngA-EngB-Septin-like GTPase superfamily. EngB GTPase family. Mg(2+) serves as cofactor.

Functionally, necessary for normal cell division and for the maintenance of normal septation. In Saccharophagus degradans (strain 2-40 / ATCC 43961 / DSM 17024), this protein is Probable GTP-binding protein EngB.